A 177-amino-acid polypeptide reads, in one-letter code: Adenine phosphoribosyltransferase (177 aa).

Belongs to the purine/pyrimidine phosphoribosyltransferase family. Homodimer.

It is found in the cytoplasm. The catalysed reaction is AMP + diphosphate = 5-phospho-alpha-D-ribose 1-diphosphate + adenine. The protein operates within purine metabolism; AMP biosynthesis via salvage pathway; AMP from adenine: step 1/1. In terms of biological role, catalyzes a salvage reaction resulting in the formation of AMP, that is energically less costly than de novo synthesis. This Idiomarina loihiensis (strain ATCC BAA-735 / DSM 15497 / L2-TR) protein is Adenine phosphoribosyltransferase.